A 251-amino-acid polypeptide reads, in one-letter code: 5'-nucleotidase SurE (251 aa).

A divalent metal cation contacts are provided by Asp-8, Asp-9, Ser-39, and Asn-95.

The protein belongs to the SurE nucleotidase family. It depends on a divalent metal cation as a cofactor.

The protein localises to the cytoplasm. The enzyme catalyses a ribonucleoside 5'-phosphate + H2O = a ribonucleoside + phosphate. In terms of biological role, nucleotidase that shows phosphatase activity on nucleoside 5'-monophosphates. This Clostridium botulinum (strain Alaska E43 / Type E3) protein is 5'-nucleotidase SurE.